Consider the following 182-residue polypeptide: Endoribonuclease YbeY (182 aa).

Zn(2+)-binding residues include His-115, His-119, and His-125.

It belongs to the endoribonuclease YbeY family. Requires Zn(2+) as cofactor.

It is found in the cytoplasm. Its function is as follows. Single strand-specific metallo-endoribonuclease involved in late-stage 70S ribosome quality control and in maturation of the 3' terminus of the 16S rRNA. This Bifidobacterium longum subsp. infantis (strain ATCC 15697 / DSM 20088 / JCM 1222 / NCTC 11817 / S12) protein is Endoribonuclease YbeY.